The sequence spans 60 residues: UPF0337 protein SSP1134 (60 aa).

The interval 1 to 41 is disordered; it reads MADENKFEQAKGNVKETVGNVTDNKELENEGKEDKTSGKAK. The span at 23-41 shows a compositional bias: basic and acidic residues; sequence DNKELENEGKEDKTSGKAK.

The protein belongs to the UPF0337 (CsbD) family.

In Staphylococcus saprophyticus subsp. saprophyticus (strain ATCC 15305 / DSM 20229 / NCIMB 8711 / NCTC 7292 / S-41), this protein is UPF0337 protein SSP1134.